Consider the following 736-residue polypeptide: MKNQNQHNTSKCPYHGSVTSYNSNRTTNKDWWPNQLNLSILHQHDRKTNPHDEEFNYAEEFQKLDYWALKEDLRKLMTESQDWWPADYGHYGPLFIRMAWHSAGTYRIGDGRGGGSTGTQRFAPLNSWPDNANLDKARRLLWPIKKKYGNKISWADLMILAGNVAIESMGGKTIGFGGGREDVWHPEEDIYWGAEKEWLASERYSGDRELENPLAAVQMGLIYVNPEGPDGKPDPVAAARDIRETFRRMGMNDEETVALIAGGHTFGKAHGAGPASHVGPEPEAAPIEAQGLGWISSYGKGKGRDTITSGIEGAWTPTPTQWDNSYFRLLFEYEWKLTKSPAGAYQWEAVNLREEDLAPDAEDPNVKVPPMMMTTDLALRFDPEYEKIARRFYENPEEFADAFARAWFKLTHRDMGPKTRYLGPEVPKEDFIWQDPIPTVDYELSDAEIEEIKAKILNSGLTVSELVKTAWASASTFRNSDKRGGANGARIRLAPQKDWEVNEPERLAKVLSVYEDIQRELPKKVSIADLIVLGGSAAVEKAARDAGFDVKVPFIPGRGDATQEQTDVESFSVLEPFADGFRNYQKKEYSVGPEELLIDKAQLLGLTAPEMTVLVGGLRVLGANYRDLPHGVFTDRIGVLTNDFFVNLVDMNYEWVPTEGGIYEIRDRQTGEVRWTATRVDLIFGANSILRSYAEFYAQDDNREKFVRDFINAWVKVMNADRFDIHLKQAKESVTV.

The segment at residues 100–223 (WHSAGTYRIG…LAAVQMGLIY (124 aa)) is a cross-link (tryptophyl-tyrosyl-methioninium (Trp-Tyr) (with M-249)). His-101 (proton acceptor) is an active-site residue. Residues 223–249 (YVNPEGPDGKPDPVAAARDIRETFRRM) constitute a cross-link (tryptophyl-tyrosyl-methioninium (Tyr-Met) (with W-100)). His-264 contacts heme b.

This sequence belongs to the peroxidase family. Peroxidase/catalase subfamily. Homodimer or homotetramer. It depends on heme b as a cofactor. Formation of the three residue Trp-Tyr-Met cross-link is important for the catalase, but not the peroxidase activity of the enzyme.

The catalysed reaction is H2O2 + AH2 = A + 2 H2O. It catalyses the reaction 2 H2O2 = O2 + 2 H2O. Its function is as follows. Bifunctional enzyme with both catalase and broad-spectrum peroxidase activity. The polypeptide is Catalase-peroxidase (Geobacillus kaustophilus (strain HTA426)).